The chain runs to 38 residues: Photosystem I reaction center subunit IX (38 aa).

Residues Tyr-6–Ile-26 form a helical membrane-spanning segment.

It belongs to the PsaJ family.

Its subcellular location is the plastid. It is found in the chloroplast thylakoid membrane. In terms of biological role, may help in the organization of the PsaE and PsaF subunits. The protein is Photosystem I reaction center subunit IX of Cyanidioschyzon merolae (strain NIES-3377 / 10D) (Unicellular red alga).